Consider the following 351-residue polypeptide: Protein Wnt-8b (351 aa).

An N-terminal signal peptide occupies residues 1-22 (MFLSKPSVYICLFTCVLQLSHS). Cysteine 54 and cysteine 65 are oxidised to a cystine. An N-linked (GlcNAc...) asparagine glycan is attached at asparagine 103. Disulfide bonds link cysteine 104–cysteine 112, cysteine 114–cysteine 132, cysteine 180–cysteine 194, cysteine 182–cysteine 189, cysteine 256–cysteine 294, cysteine 272–cysteine 287, cysteine 291–cysteine 333, cysteine 309–cysteine 324, cysteine 311–cysteine 321, and cysteine 316–cysteine 317. The O-palmitoleoyl serine moiety is linked to residue serine 186. N-linked (GlcNAc...) asparagine glycosylation occurs at asparagine 259.

It belongs to the Wnt family. Post-translationally, palmitoleoylation is required for efficient binding to frizzled receptors. Depalmitoleoylation leads to Wnt signaling pathway inhibition. Proteolytic processing by TIKI1 and TIKI2 promotes oxidation and formation of large disulfide-bond oligomers, leading to inactivation of WNT8B. As to expression, expression is restricted to the brain, and more specifically to the forebrain.

It is found in the secreted. Its subcellular location is the extracellular space. The protein localises to the extracellular matrix. Ligand for members of the frizzled family of seven transmembrane receptors. May play an important role in the development and differentiation of certain forebrain structures, notably the hippocampus. This Homo sapiens (Human) protein is Protein Wnt-8b (WNT8B).